We begin with the raw amino-acid sequence, 70 residues long: Spore germination protein-like protein YpzD (70 aa).

Belongs to the GerPA/GerPF family.

The chain is Spore germination protein-like protein YpzD (ypzD) from Bacillus subtilis (strain 168).